We begin with the raw amino-acid sequence, 97 residues long: Coiled-coil domain-containing protein 167 (97 aa).

Residues 36-80 (LRKMELTEEGRKSLEKEKSSLSSRLSNYERELKSLRHENRKNMLL) are a coiled coil. Residues 78–95 (MLLSVAIFLLFAVGYYCW) form a helical membrane-spanning segment.

The protein resides in the membrane. The protein is Coiled-coil domain-containing protein 167 (ccdc167) of Xenopus tropicalis (Western clawed frog).